Here is a 245-residue protein sequence, read N- to C-terminus: tRNA pseudouridine synthase A (245 aa).

The active-site Nucleophile is the aspartate 52. Tyrosine 111 is a substrate binding site.

Belongs to the tRNA pseudouridine synthase TruA family. Homodimer.

The enzyme catalyses uridine(38/39/40) in tRNA = pseudouridine(38/39/40) in tRNA. Functionally, formation of pseudouridine at positions 38, 39 and 40 in the anticodon stem and loop of transfer RNAs. This is tRNA pseudouridine synthase A from Thermotoga sp. (strain RQ2).